The primary structure comprises 359 residues: Pheromone receptor 1 (359 aa).

Transmembrane regions (helical) follow at residues 5–25 (VTPF…GWHI), 33–53 (ITLS…SVAW), 71–87 (LRHA…LVIA), 110–130 (IIID…LMIV), 147–167 (FLSL…IVSF), 206–226 (LLVL…GSVS), and 268–288 (LILS…MFGL). The interval 335–359 (TSGGIDGSPHSEKFSINTPTKYEEA) is disordered. The segment covering 348 to 359 (FSINTPTKYEEA) has biased composition (polar residues).

It belongs to the G-protein coupled receptor 4 family.

Its subcellular location is the membrane. In terms of biological role, receptor for the A2 pheromone, a prenylated mating factor. In Ustilago hordei (Barley covered smut fungus), this protein is Pheromone receptor 1 (PRA1).